Consider the following 103-residue polypeptide: NAD(P)H-quinone oxidoreductase subunit 4L, organellar chromatophore (103 aa).

The next 3 membrane-spanning stretches (helical) occupy residues I3–L23, V32–N52, and V63–L83.

It belongs to the complex I subunit 4L family. In terms of assembly, NDH is composed of at least 16 different subunits, 5 of which are encoded in the nucleus.

It is found in the plastid. It localises to the organellar chromatophore thylakoid membrane. The enzyme catalyses a plastoquinone + NADH + (n+1) H(+)(in) = a plastoquinol + NAD(+) + n H(+)(out). It carries out the reaction a plastoquinone + NADPH + (n+1) H(+)(in) = a plastoquinol + NADP(+) + n H(+)(out). Functionally, NDH shuttles electrons from NAD(P)H:plastoquinone, via FMN and iron-sulfur (Fe-S) centers, to quinones in the photosynthetic chain and possibly in a chloroplast respiratory chain. The immediate electron acceptor for the enzyme in this species is believed to be plastoquinone. Couples the redox reaction to proton translocation, and thus conserves the redox energy in a proton gradient. The sequence is that of NAD(P)H-quinone oxidoreductase subunit 4L, organellar chromatophore from Paulinella chromatophora.